The primary structure comprises 397 residues: Putative nickel insertion protein (397 aa).

It belongs to the LarC family.

This chain is Putative nickel insertion protein, found in Synechococcus sp. (strain JA-2-3B'a(2-13)) (Cyanobacteria bacterium Yellowstone B-Prime).